Consider the following 402-residue polypeptide: Ubiquitin-like modifier-activating enzyme 5 (402 aa).

Residues Gly-81, Asp-102, Lys-125, Asn-148, and Asn-182 each coordinate ATP. Zn(2+) is bound by residues Cys-224 and Cys-227. Cys-248 (glycyl thioester intermediate) is an active-site residue. Zn(2+) contacts are provided by Cys-301 and Cys-306. The interval 369–402 is disordered; that stretch reads EAPEKSSETSEETVTTAPPDDASLEDLMAQMKSM.

The protein belongs to the ubiquitin-activating E1 family. UBA5 subfamily.

Functionally, E1-like enzyme which activates UFM1. The chain is Ubiquitin-like modifier-activating enzyme 5 from Drosophila erecta (Fruit fly).